The chain runs to 308 residues: uncharacterized protein (308 aa).

A signal peptide spans 1 to 17 (MKSLALLLSLLINFSIG). Residues asparagine 13, asparagine 91, asparagine 159, and asparagine 210 are each glycosylated (N-linked (GlcNAc...) asparagine). Residues 213 to 308 (DEISGGTGAG…HDNYISSFCT (96 aa)) are disordered. 2 stretches are compositionally biased toward gly residues: residues 217 to 231 (GGTG…GSGS) and 239 to 252 (SDGG…GSGS). The span at 267–284 (NKNNNKNKNNNNNNNNYN) shows a compositional bias: low complexity.

Its subcellular location is the secreted. This is an uncharacterized protein from Dictyostelium discoideum (Social amoeba).